The chain runs to 261 residues: Uridine-cytidine kinase 2 (261 aa).

The interval 1 to 24 (MAGDSEQALPKHSPQNGQPFLIGV) is disordered. 26-34 (GGTASGKSS) provides a ligand contact to ATP. Positions 83, 111, 116, 165, 175, and 183 each coordinate substrate. Position 212 (D212) interacts with ATP. A compositionally biased stretch (polar residues) spans 238-247 (NGYTNGFTSP). Residues 238 to 261 (NGYTNGFTSPRTRHPSDSNSSRPH) are disordered.

This sequence belongs to the uridine kinase family. As to quaternary structure, homotetramer.

It carries out the reaction uridine + ATP = UMP + ADP + H(+). The catalysed reaction is cytidine + ATP = CMP + ADP + H(+). Its pathway is pyrimidine metabolism; CTP biosynthesis via salvage pathway; CTP from cytidine: step 1/3. It participates in pyrimidine metabolism; UMP biosynthesis via salvage pathway; UMP from uridine: step 1/1. Phosphorylates uridine and cytidine to uridine monophosphate and cytidine monophosphate. Does not phosphorylate deoxyribonucleosides or purine ribonucleosides. Can use ATP or GTP as a phosphate donor. In Xenopus tropicalis (Western clawed frog), this protein is Uridine-cytidine kinase 2 (uck2).